The primary structure comprises 141 residues: Large ribosomal subunit protein uL16 (141 aa).

The protein belongs to the universal ribosomal protein uL16 family. In terms of assembly, part of the 50S ribosomal subunit.

Its function is as follows. Binds 23S rRNA and is also seen to make contacts with the A and possibly P site tRNAs. This Petrotoga mobilis (strain DSM 10674 / SJ95) protein is Large ribosomal subunit protein uL16.